We begin with the raw amino-acid sequence, 350 residues long: Histidinol-phosphate aminotransferase 2 (350 aa).

Position 210 is an N6-(pyridoxal phosphate)lysine (Lys210).

This sequence belongs to the class-II pyridoxal-phosphate-dependent aminotransferase family. Histidinol-phosphate aminotransferase subfamily. As to quaternary structure, homodimer. It depends on pyridoxal 5'-phosphate as a cofactor.

It catalyses the reaction L-histidinol phosphate + 2-oxoglutarate = 3-(imidazol-4-yl)-2-oxopropyl phosphate + L-glutamate. The protein operates within amino-acid biosynthesis; L-histidine biosynthesis; L-histidine from 5-phospho-alpha-D-ribose 1-diphosphate: step 7/9. In Mannheimia succiniciproducens (strain KCTC 0769BP / MBEL55E), this protein is Histidinol-phosphate aminotransferase 2.